Reading from the N-terminus, the 190-residue chain is Xanthine phosphoribosyltransferase (190 aa).

The xanthine site is built by leucine 20 and asparagine 27. 128 to 132 (ANGKA) lines the 5-phospho-alpha-D-ribose 1-diphosphate pocket. Lysine 156 provides a ligand contact to xanthine.

It belongs to the purine/pyrimidine phosphoribosyltransferase family. Xpt subfamily. In terms of assembly, homodimer.

The protein resides in the cytoplasm. The enzyme catalyses XMP + diphosphate = xanthine + 5-phospho-alpha-D-ribose 1-diphosphate. It functions in the pathway purine metabolism; XMP biosynthesis via salvage pathway; XMP from xanthine: step 1/1. In terms of biological role, converts the preformed base xanthine, a product of nucleic acid breakdown, to xanthosine 5'-monophosphate (XMP), so it can be reused for RNA or DNA synthesis. The protein is Xanthine phosphoribosyltransferase of Stutzerimonas stutzeri (strain A1501) (Pseudomonas stutzeri).